Reading from the N-terminus, the 35-residue chain is EDCLGWFSRCSPKNDKCCPNYKCSSKDLWCKYKIW.

3 disulfide bridges follow: C3–C18, C10–C23, and C17–C30.

It belongs to the neurotoxin 10 (Hwtx-1) family. As to expression, expressed by the venom gland.

It localises to the secreted. In terms of biological role, gating-modifier toxin that both inhibits the peak current of human Nav1.1/SCN1A, rat Nav1.2/SCN2A, human Nav1.6/SCN8A, and human Nav1.7/SCN9A and concurrently inhibits fast inactivation of human Nav1.1 and rat Nav1.3/SCN3A. The relative rank order potency for Nav modulation is Nav1.3 (inactivation EC(50)=45 nM) &gt; Nav1.7 &gt; Nav1.2 &gt; Nav1.1 (inactivation) &gt; Nav1.1 &gt; Nav1.6 &gt; Nav1.3 (IC(50)=8 uM). The DII and DIV S3-S4 loops of Nav channel voltage sensors are important for the interaction of this toxin with Nav channels but cannot account for its unique subtype selectivity. It is the variability of the S1-S2 loops between NaV channels which contributes substantially to the selectivity profile observed for this toxin, particularly with regards to fast inactivation. This toxin may bind the channel in the resting state. The protein is Beta/delta-theraphotoxin-Pre1a of Psalmopoeus reduncus (Costa Rican orangemouth tarantula).